The primary structure comprises 610 residues: Threonine--tRNA ligase (610 aa).

The segment at 1–29 (MANHDQQTVSSAAATTSASPSPVVLPKTS) is disordered. Positions 8–24 (TVSSAAATTSASPSPVV) are enriched in low complexity. The catalytic stretch occupies residues 209–502 (DHRRIGKDLD…MTENYAGDYP (294 aa)). The Zn(2+) site is built by Cys302, His353, and His479.

It belongs to the class-II aminoacyl-tRNA synthetase family. In terms of assembly, homodimer. The cofactor is Zn(2+).

It is found in the cytoplasm. The enzyme catalyses tRNA(Thr) + L-threonine + ATP = L-threonyl-tRNA(Thr) + AMP + diphosphate + H(+). Catalyzes the attachment of threonine to tRNA(Thr) in a two-step reaction: L-threonine is first activated by ATP to form Thr-AMP and then transferred to the acceptor end of tRNA(Thr). Also edits incorrectly charged L-seryl-tRNA(Thr). The chain is Threonine--tRNA ligase from Synechococcus sp. (strain WH7803).